The chain runs to 728 residues: 1,4-alpha-glucan branching enzyme GlgB (728 aa).

The active-site Nucleophile is the Asp-405. Glu-458 serves as the catalytic Proton donor.

It belongs to the glycosyl hydrolase 13 family. GlgB subfamily. Monomer.

The enzyme catalyses Transfers a segment of a (1-&gt;4)-alpha-D-glucan chain to a primary hydroxy group in a similar glucan chain.. It functions in the pathway glycan biosynthesis; glycogen biosynthesis. Catalyzes the formation of the alpha-1,6-glucosidic linkages in glycogen by scission of a 1,4-alpha-linked oligosaccharide from growing alpha-1,4-glucan chains and the subsequent attachment of the oligosaccharide to the alpha-1,6 position. This is 1,4-alpha-glucan branching enzyme GlgB from Escherichia coli O6:K15:H31 (strain 536 / UPEC).